A 453-amino-acid polypeptide reads, in one-letter code: Bifunctional protein GlmU (453 aa).

The segment at 1–227 is pyrophosphorylase; it reads MNKLSVVILA…LMEVEGVNNR (227 aa). UDP-N-acetyl-alpha-D-glucosamine-binding positions include 9-12, K23, Q74, 79-80, 101-103, G138, E152, N167, and N225; these read LAAG, GT, and YGD. D103 contributes to the Mg(2+) binding site. N225 serves as a coordination point for Mg(2+). The linker stretch occupies residues 228 to 248; the sequence is LQLANLERHFQRKQVEKLLLA. Residues 249-453 form an N-acetyltransferase region; the sequence is GVTFADPARF…ISNWQRPKRK (205 aa). 2 residues coordinate UDP-N-acetyl-alpha-D-glucosamine: R331 and K349. H361 (proton acceptor) is an active-site residue. Residues Y364 and N375 each coordinate UDP-N-acetyl-alpha-D-glucosamine. Acetyl-CoA is bound by residues A378, 384 to 385, S403, A421, and R438; that span reads NY.

This sequence in the N-terminal section; belongs to the N-acetylglucosamine-1-phosphate uridyltransferase family. It in the C-terminal section; belongs to the transferase hexapeptide repeat family. As to quaternary structure, homotrimer. The cofactor is Mg(2+).

It localises to the cytoplasm. The enzyme catalyses alpha-D-glucosamine 1-phosphate + acetyl-CoA = N-acetyl-alpha-D-glucosamine 1-phosphate + CoA + H(+). It catalyses the reaction N-acetyl-alpha-D-glucosamine 1-phosphate + UTP + H(+) = UDP-N-acetyl-alpha-D-glucosamine + diphosphate. Its pathway is nucleotide-sugar biosynthesis; UDP-N-acetyl-alpha-D-glucosamine biosynthesis; N-acetyl-alpha-D-glucosamine 1-phosphate from alpha-D-glucosamine 6-phosphate (route II): step 2/2. It participates in nucleotide-sugar biosynthesis; UDP-N-acetyl-alpha-D-glucosamine biosynthesis; UDP-N-acetyl-alpha-D-glucosamine from N-acetyl-alpha-D-glucosamine 1-phosphate: step 1/1. It functions in the pathway bacterial outer membrane biogenesis; LPS lipid A biosynthesis. In terms of biological role, catalyzes the last two sequential reactions in the de novo biosynthetic pathway for UDP-N-acetylglucosamine (UDP-GlcNAc). The C-terminal domain catalyzes the transfer of acetyl group from acetyl coenzyme A to glucosamine-1-phosphate (GlcN-1-P) to produce N-acetylglucosamine-1-phosphate (GlcNAc-1-P), which is converted into UDP-GlcNAc by the transfer of uridine 5-monophosphate (from uridine 5-triphosphate), a reaction catalyzed by the N-terminal domain. The sequence is that of Bifunctional protein GlmU from Histophilus somni (strain 129Pt) (Haemophilus somnus).